We begin with the raw amino-acid sequence, 358 residues long: Probable branched-chain-amino-acid aminotransferase (358 aa).

Lys-196 carries the post-translational modification N6-(pyridoxal phosphate)lysine.

This sequence belongs to the class-IV pyridoxal-phosphate-dependent aminotransferase family. Requires pyridoxal 5'-phosphate as cofactor.

It catalyses the reaction L-leucine + 2-oxoglutarate = 4-methyl-2-oxopentanoate + L-glutamate. It carries out the reaction L-isoleucine + 2-oxoglutarate = (S)-3-methyl-2-oxopentanoate + L-glutamate. The enzyme catalyses L-valine + 2-oxoglutarate = 3-methyl-2-oxobutanoate + L-glutamate. It functions in the pathway amino-acid biosynthesis; L-isoleucine biosynthesis; L-isoleucine from 2-oxobutanoate: step 4/4. Its pathway is amino-acid biosynthesis; L-leucine biosynthesis; L-leucine from 3-methyl-2-oxobutanoate: step 4/4. The protein operates within amino-acid biosynthesis; L-valine biosynthesis; L-valine from pyruvate: step 4/4. Its function is as follows. Acts on leucine, isoleucine and valine. In Staphylococcus aureus (strain MRSA252), this protein is Probable branched-chain-amino-acid aminotransferase (ilvE).